The sequence spans 399 residues: Succinate--CoA ligase [ADP-forming] subunit beta (399 aa).

Residues 9 to 254 (KALLREFGVP…ESEEDAKEIE (246 aa)) enclose the ATP-grasp domain. ATP is bound by residues lysine 46, 53–55 (GRG), glutamate 109, serine 112, and glutamate 117. Residues asparagine 209 and aspartate 223 each coordinate Mg(2+). Residues asparagine 274 and 331 to 333 (GIM) contribute to the substrate site.

This sequence belongs to the succinate/malate CoA ligase beta subunit family. Heterotetramer of two alpha and two beta subunits. The cofactor is Mg(2+).

The catalysed reaction is succinate + ATP + CoA = succinyl-CoA + ADP + phosphate. The enzyme catalyses GTP + succinate + CoA = succinyl-CoA + GDP + phosphate. Its pathway is carbohydrate metabolism; tricarboxylic acid cycle; succinate from succinyl-CoA (ligase route): step 1/1. In terms of biological role, succinyl-CoA synthetase functions in the citric acid cycle (TCA), coupling the hydrolysis of succinyl-CoA to the synthesis of either ATP or GTP and thus represents the only step of substrate-level phosphorylation in the TCA. The beta subunit provides nucleotide specificity of the enzyme and binds the substrate succinate, while the binding sites for coenzyme A and phosphate are found in the alpha subunit. This chain is Succinate--CoA ligase [ADP-forming] subunit beta, found in Nitrobacter winogradskyi (strain ATCC 25391 / DSM 10237 / CIP 104748 / NCIMB 11846 / Nb-255).